A 554-amino-acid polypeptide reads, in one-letter code: Phenylalanine--tRNA ligase beta subunit (554 aa).

A B5 domain is found at Leu-276–Gly-351. The Mg(2+) site is built by Asp-329, Asp-335, Glu-338, and Glu-339.

The protein belongs to the phenylalanyl-tRNA synthetase beta subunit family. Type 2 subfamily. In terms of assembly, tetramer of two alpha and two beta subunits. The cofactor is Mg(2+).

The protein localises to the cytoplasm. The enzyme catalyses tRNA(Phe) + L-phenylalanine + ATP = L-phenylalanyl-tRNA(Phe) + AMP + diphosphate + H(+). The polypeptide is Phenylalanine--tRNA ligase beta subunit (Methanococcus maripaludis (strain C6 / ATCC BAA-1332)).